Consider the following 327-residue polypeptide: Ribosomal RNA small subunit methyltransferase H (327 aa).

Residues 42 to 44, Asp-61, Leu-95, Asp-109, and Gln-116 each bind S-adenosyl-L-methionine; that span reads GGH.

It belongs to the methyltransferase superfamily. RsmH family.

It localises to the cytoplasm. It catalyses the reaction cytidine(1402) in 16S rRNA + S-adenosyl-L-methionine = N(4)-methylcytidine(1402) in 16S rRNA + S-adenosyl-L-homocysteine + H(+). Functionally, specifically methylates the N4 position of cytidine in position 1402 (C1402) of 16S rRNA. In Desulfovibrio desulfuricans (strain ATCC 27774 / DSM 6949 / MB), this protein is Ribosomal RNA small subunit methyltransferase H.